The chain runs to 1033 residues: MTARMISIYGLVLASMMASVWASSSRFQRLPQSQSVVENESVKFECESTDSYSELHYDWLHNGHRIAYDKRVHQIGSNLHIEAARRTEDVGSYVCIATNLASGAREASPPAKLSVIYLESASVQLLGSNRNELLLKCHVEGASGDSEPLEIEWYRNSEKLSTWKNVQLDQHRLIIRQPGSDDDGLYRCTASNAAGRVMSKQGYAYQSSVKCLPRLARRKNQKMMESWDKQTFLCRGKRGGAAGLEALPAAPEDLRIVQGPVGQSIIKEGEPTALTCLYELPDELKNQRIQLRWRKDGKLLRQVELGGSAPITGHSFDSGKDALLREDARLVLHKQNGTLSFASIIASDAGQYQCQLQLEGHLPISSTPGVLEVIEQLKFVPQPTSKNLELDAVVAKVHCKAQGTPTPQVQWVRDGENSTLPDQVEVDANGTLIFRNVNSEHRGNYTCLASNTQGQINATVAINVVVTPKFSVPPVGPIETSEQGTVVMHCQAIGDPKPTIQWDKDLKYLSENNTDRERFRFLENGTLEIRNVQVEDEGSYGCTIGNSAGLKREDVQLVVKTTGDGFAPEESGGDGFLVTRAVLITMTVALAYIVLVVGLMLWCRYRRQARKARLNDLSTKEAGGDQPDAAGNGKGSEQEPCLSKQHNGHSKSRSKSSGDAQKSDDTACSQQSRASKKSAHIYEQLALPRSGLSELIQIGRGEFGDVFVGKLKATLVTSPTDKDADTEKQHSNSENGSGGSGSGSTTLSTLNEKRRSKTSMDDIEEIKEEEQEQHNQSALEQLVLVKALNKVKDEQACQEFRRQLDLLRAISHKGVVRLFGLCREKDPHYMVLEYTDWGDLKQFLLATAGKVNTATAGSSSPPPLTTSQVLAVAYQIARGMDAIYRARFTHRDLATRNCVISSEFIVKVSYPALCKDKYSREYHKHRNTLLPIRWLAPECIQEDEYTTKSDIFAYGVVVWELFNQATKLPHEELTNEQVVQRSQAGSLEWSVAEATPDSLREILLSCWVSNPKERPSFSQLGAALSKAMQSVEK.

A signal peptide spans 1–22 (MTARMISIYGLVLASMMASVWA). The Extracellular segment spans residues 23 to 581 (SSSRFQRLPQ…GGDGFLVTRA (559 aa)). Ig-like C2-type domains lie at 25-108 (SRFQ…REAS), 109-199 (PPAK…RVMS), 251-365 (PEDL…LPIS), 368-463 (PGVL…VAIN), and 468-558 (PKFS…VQLV). Residue asparagine 39 is glycosylated (N-linked (GlcNAc...) asparagine). Intrachain disulfides connect cysteine 46–cysteine 95, cysteine 137–cysteine 188, cysteine 276–cysteine 354, and cysteine 399–cysteine 447. N-linked (GlcNAc...) asparagine glycans are attached at residues asparagine 336, asparagine 417, asparagine 429, asparagine 444, asparagine 457, asparagine 512, and asparagine 524. A disulfide bridge connects residues cysteine 490 and cysteine 542. A helical membrane pass occupies residues 582–602 (VLITMTVALAYIVLVVGLMLW). Topologically, residues 603–1033 (CRYRRQARKA…LSKAMQSVEK (431 aa)) are cytoplasmic. 2 disordered regions span residues 617 to 679 (LSTK…KKSA) and 718 to 760 (SPTD…KTSM). Polar residues predominate over residues 655 to 673 (KSSGDAQKSDDTACSQQSR). Residue serine 678 is modified to Phosphoserine. The region spanning 692-1028 (LSELIQIGRG…QLGAALSKAM (337 aa)) is the Protein kinase; inactive domain. Over residues 720–731 (TDKDADTEKQHS) the composition is skewed to basic and acidic residues.

The protein belongs to the protein kinase superfamily. Tyr protein kinase family. Insulin receptor subfamily. Interacts with plexA; component of a receptor complex that mediates the repulsive signaling in response to Semaphorin ligands.

Its subcellular location is the cell membrane. Functionally, acts as a calcium-dependent, homophilic cell adhesion molecule that regulates neural recognition during the development of the nervous system. Component of the repulsive Plexin signaling response to regulate motor axon guidance at the embryonic stage. Also component of a receptor complex that is required in the adult visual system to innervate the lamina layer; specific targeting of R1-R6 axons. This Drosophila erecta (Fruit fly) protein is Tyrosine-protein kinase-like otk.